Here is a 440-residue protein sequence, read N- to C-terminus: Putative epoxide hydrolase (440 aa).

Residues 1-21 (MTKTLAEQPGEGAAPVSPSPS) are disordered. A signal peptide (tat-type signal) is located at residues 1–49 (MTKTLAEQPGEGAAPVSPSPSRRALLHGAAGLGALAAGAAVAGPGLAFA).

This sequence belongs to the peptidase S33 family. Predicted to be exported by the Tat system. The position of the signal peptide cleavage has not been experimentally proven.

The catalysed reaction is an epoxide + H2O = an ethanediol. The protein is Putative epoxide hydrolase of Stigmatella aurantiaca (strain DW4/3-1).